Here is a 587-residue protein sequence, read N- to C-terminus: GATA zinc finger domain-containing protein 3 (587 aa).

The segment covering 53–74 (NINNNINNNNNNNNNNNNNNIN) has biased composition (low complexity). Disordered stretches follow at residues 53–141 (NINN…LKIP), 179–294 (QLAH…SSPS), and 312–392 (QTSP…ATIN). Polar residues predominate over residues 75–86 (QYHQNHYDQYSD). Low complexity-rich tracts occupy residues 87 to 136 (NNCN…NNNN), 183 to 202 (NSSM…TPTS), 237 to 264 (NING…INNG), 272 to 292 (GNNN…NSSS), and 316 to 333 (SQQS…QQSQ). Composition is skewed to polar residues over residues 340 to 358 (INTT…TNSP) and 365 to 379 (NESS…TPLS). The GATA-type zinc-finger motif lies at 500–525 (CIFCGTMETPEWRKGPGGHKTLCNAC). The segment at 536–587 (ENQNNGGSPNPQQNNVTTTTTTTTSTSTNSPNSNGNNFSPESAMSVSKLISD) is disordered. The span at 538 to 575 (QNNGGSPNPQQNNVTTTTTTTTSTSTNSPNSNGNNFSP) shows a compositional bias: low complexity. The segment covering 577 to 587 (SAMSVSKLISD) has biased composition (polar residues).

The protein is GATA zinc finger domain-containing protein 3 (gtaC) of Dictyostelium discoideum (Social amoeba).